Here is a 275-residue protein sequence, read N- to C-terminus: Large ribosomal subunit protein uL2 (275 aa).

The interval 224–275 (AMNPVDHPHGGGEAKAGQGNPHPVTPWGVPTKGYKTRKNKRTQQFIVRDRRG) is disordered.

The protein belongs to the universal ribosomal protein uL2 family. As to quaternary structure, part of the 50S ribosomal subunit. Forms a bridge to the 30S subunit in the 70S ribosome.

In terms of biological role, one of the primary rRNA binding proteins. Required for association of the 30S and 50S subunits to form the 70S ribosome, for tRNA binding and peptide bond formation. It has been suggested to have peptidyltransferase activity; this is somewhat controversial. Makes several contacts with the 16S rRNA in the 70S ribosome. The sequence is that of Large ribosomal subunit protein uL2 from Xanthomonas axonopodis pv. citri (strain 306).